The sequence spans 206 residues: High frequency lysogenization protein HflD homolog (206 aa).

It belongs to the HflD family.

The protein resides in the cytoplasm. Its subcellular location is the cell inner membrane. This Pseudomonas paraeruginosa (strain DSM 24068 / PA7) (Pseudomonas aeruginosa (strain PA7)) protein is High frequency lysogenization protein HflD homolog.